The chain runs to 367 residues: CCN family member 4 (367 aa).

The signal sequence occupies residues 1–22; the sequence is MRWLLPWTLAAVAVLMVGNILA. The 74-residue stretch at 45–118 folds into the IGFBP N-terminal domain; sequence RPEFCKWPCE…RYAIGVCAQV (74 aa). 4 cysteine pairs are disulfide-bonded: C49–C73, C53–C75, C55–C76, and C62–C79. N-linked (GlcNAc...) asparagine glycosylation is present at N86. 2 disulfides stabilise this stretch: C87–C101 and C93–C115. Residues 121-186 enclose the VWFC domain; the sequence is VGCVLDGVRY…GQCCEQWVCD (66 aa). A glycan (N-linked (GlcNAc...) asparagine) is linked at N143. One can recognise a TSP type-1 domain in the interval 215 to 260; the sequence is NCIAYTSPWSPCSTTCGLGISTRISNVNARCWPEQESRLCNLRPCD. 5 disulfides stabilise this stretch: C273–C310, C290–C324, C301–C340, C304–C342, and C309–C346. Positions 273-347 constitute a CTCK domain; sequence CLAVYQPEEA…NACFCNLSCR (75 aa). N284 is a glycosylation site (N-linked (GlcNAc...) asparagine). N343 carries an N-linked (GlcNAc...) asparagine glycan.

This sequence belongs to the CCN family.

Its subcellular location is the secreted. Downstream regulator in the Wnt/Frizzled-signaling pathway. Associated with cell survival. Adheres to skin and melanoma fibroblasts. In vitro binding to skin fibroblasts occurs through the proteoglycans, decorin and biglycan. The chain is CCN family member 4 (Ccn4) from Rattus norvegicus (Rat).